Here is a 410-residue protein sequence, read N- to C-terminus: MKMEQALNITSEIGKLQTVLVKRPGSELENITPEYLESLLFDDIPYLKMMQKEHDFFAKTMRDSNIEVLYLEKLAAEALREANNKESFLTKMIKESNQMDESALYVRDYLMSFDEEEMIRKLMSGLKKSEIPERKKKHLNEMMDEQYPFFLDPLPNLYFTRDPAAVIGNGVTINRMFQPARRRESIFIELILKHHPRFSNQDIPVWSGRGEPFSLEGGDELVLNEETVLVGVSERTDARAVERLAESLFNRSPKIKRVLAVEIPETRSFMHLDTVFTMVNFAQFTIHPAIQNQQGELNIYILEKSENGLEITPRRDFQRVIAEVLDEPEIDFIPCGGEDVIVSAREQWNDGANTLAIAPGEVITYDRNQVSNDLLRSAGIKVHEVISSELSRGRGGPRCMTMPLVRENLK.

Cys399 functions as the Amidino-cysteine intermediate in the catalytic mechanism.

Belongs to the arginine deiminase family.

It localises to the cytoplasm. The enzyme catalyses L-arginine + H2O = L-citrulline + NH4(+). It participates in amino-acid degradation; L-arginine degradation via ADI pathway; carbamoyl phosphate from L-arginine: step 1/2. This is Arginine deiminase from Listeria monocytogenes serovar 1/2a (strain ATCC BAA-679 / EGD-e).